The following is a 565-amino-acid chain: Bifunctional dihydrofolate reductase-thymidylate synthase 2 (565 aa).

Residues 65 to 242 (TYQVVVAATK…LRFSFTTHVR (178 aa)) enclose the DHFR domain. Valine 69 contacts substrate. Residues alanine 71 and 77 to 83 (GIGKDGK) contribute to the NADP(+) site. Position 91 (aspartate 91) interacts with substrate. NADP(+) contacts are provided by residues 115–117 (RKT) and 136–139 (LSRS). Isoleucine 178 contributes to the substrate binding site. 179-186 (GGGDILRE) contacts NADP(+). Threonine 199 lines the substrate pocket. Positions 245–280 (SSSAGEASDESDGSKVLQVDWKKFSSVLPKMIFDRH) are hinge. The tract at residues 281-565 (EEYLYLNLVK…HKKIDMKMAV (285 aa)) is thymidylate synthase. Arginine 302 lines the dUMP pocket. Cysteine 447 is a catalytic residue. Residues histidine 448, 466–470 (QRSAD), asparagine 478, and 508–510 (HVY) each bind dUMP.

In the N-terminal section; belongs to the dihydrofolate reductase family. This sequence in the C-terminal section; belongs to the thymidylate synthase family. Heterodimer or homodimer.

It carries out the reaction (6S)-5,6,7,8-tetrahydrofolate + NADP(+) = 7,8-dihydrofolate + NADPH + H(+). The enzyme catalyses dUMP + (6R)-5,10-methylene-5,6,7,8-tetrahydrofolate = 7,8-dihydrofolate + dTMP. Its pathway is cofactor biosynthesis; tetrahydrofolate biosynthesis; 5,6,7,8-tetrahydrofolate from 7,8-dihydrofolate: step 1/1. Bifunctional enzyme. Involved in de novo dTMP biosynthesis. Key enzyme in folate metabolism. Can play two different roles depending on the source of dihydrofolate: de novo synthesis of tetrahydrofolate or recycling of the dihydrofolate released as one of the end products of the TS catalyzed reaction. Catalyzes an essential reaction for de novo glycine and purine synthesis, DNA precursor synthesis, and for the conversion of dUMP to dTMP. In Arabidopsis thaliana (Mouse-ear cress), this protein is Bifunctional dihydrofolate reductase-thymidylate synthase 2 (THY-2).